Reading from the N-terminus, the 357-residue chain is Leucoanthocyanidin dioxygenase (357 aa).

In terms of domain architecture, Fe2OG dioxygenase spans 212–311 (LLLQMKINYY…RISWAVFCEP (100 aa)). Residues H236, D238, and H292 each coordinate Fe cation.

Belongs to the iron/ascorbate-dependent oxidoreductase family. Requires Fe cation as cofactor. L-ascorbate serves as cofactor.

It catalyses the reaction a (2R,3S,4S)-leucoanthocyanidin + 2-oxoglutarate + O2 = a 4-H-anthocyanidin with a 3-hydroxy group + succinate + CO2 + 2 H2O. It participates in pigment biosynthesis; anthocyanin biosynthesis. Its function is as follows. Oxidation of leucoanthocyanidins into anthocyanidins. This chain is Leucoanthocyanidin dioxygenase (ANS), found in Malus domestica (Apple).